A 590-amino-acid chain; its full sequence is 2-hydroxyacyl-CoA lyase (590 aa).

2-hydroxyisobutanoyl-CoA is bound by residues G43, Q128, Q255, 273–274, and R362; that span reads RS. 410–412 lines the thiamine diphosphate pocket; sequence GDL. R417 serves as a coordination point for 2-hydroxyisobutanoyl-CoA. G433 provides a ligand contact to thiamine diphosphate. A Mg(2+)-binding site is contributed by D460. Residues 461-462 and 487-492 each bind thiamine diphosphate; these read GA and NRAWNI. Mg(2+) is bound by residues N487 and A489. E493 (proton acceptor) is an active-site residue. Position 561–564 (561–564) interacts with 2-hydroxyisobutanoyl-CoA; it reads DSGK. The tract at residues 566–590 is C-terminal lid; sequence LGFVPDYQALTPWNDAEVARRQEGI.

The protein belongs to the TPP enzyme family. In terms of assembly, a homotetramer formed by a dimer of dimers; active sites are located in the dimer interface. Mg(2+) serves as cofactor. It depends on thiamine diphosphate as a cofactor.

It catalyses the reaction 2-hydroxyisobutanoyl-CoA = formyl-CoA + acetone. Activity is stimulated by thiamine diphosphate. A lyase that reversibly degrades 2-hydroxyisobutyryl-CoA (2-HIB-CoA) to acetone and formyl-CoA. Probably also cleaves 2-hydroxy-2-methylbutyryl-CoA to butanone and formyl-CoA. Does not act on 2-hydroxy-2-ethylbutyryl-CoA. A C-terminal lid closes the active site upon substrate binding, and with residues Leu-127 and Ile-492 restricts the size of the active site cavity so it can only use short-chain (C4 and C5) acyl substrates. Part of a pathway that allows cells to grow on 2-methylpropane-1,2-diol or 2-hydroxyisobutyric acid (2-HIBA) as a sole carbon source. This is 2-hydroxyacyl-CoA lyase from Actinomycetospora chiangmaiensis (strain DSM 45062 / JCM 15998 / CCTCC AA 205017 / NBRC 104400 / YIM 0006).